We begin with the raw amino-acid sequence, 384 residues long: MPIRKSNTYLSLVNSYLIDSPQPSSINYWWNVGSLLGLCLVIQIASGIFLAMHYSSNIELAFNSVEHIMRDVNAGWLIRYIHANGASFFFICMYLHIGKALYYGSYKSPRVMLWVIGVIIFVVTMATAFMGYCLVYGQMSHWGATVITNLLSAIPFIGKDIVPFIWGGFSVSNPTIQRFFALHFLLPFILAALVCMHLMALHVNGSSNPLGITGNVDRLPMHPYFIFKDLVTVFVFLLVFSLFVFYSPNTLGHPDNYIPGNPLVTPPSIVPEWYLLPFYAILRSIPDKLGGVIAMFGAILILLTLPYTDRSFIRGNSFKVLSKFMFFLFLFNFILLGNLGQLHVEVPYIELGQYATAFYFAYYLLIVPAISSAENILYYIGTKK.

A run of 4 helical transmembrane segments spans residues 32–52, 76–98, 113–133, and 179–199; these read VGSL…FLAM, WLIR…LHIG, LWVI…MGYC, and FFAL…MHLM. Heme b-binding residues include H82 and H96. Positions 183 and 197 each coordinate heme b. H202 lines the a ubiquinone pocket. 4 consecutive transmembrane segments (helical) span residues 225 to 245, 289 to 309, 321 to 341, and 348 to 368; these read FIFK…LFVF, LGGV…PYTD, LSKF…NLGQ, and YIEL…LIVP.

This sequence belongs to the cytochrome b family. As to quaternary structure, fungal cytochrome b-c1 complex contains 10 subunits; 3 respiratory subunits, 2 core proteins and 5 low-molecular weight proteins. Cytochrome b-c1 complex is a homodimer. The cofactor is heme b.

The protein resides in the mitochondrion inner membrane. Functionally, component of the ubiquinol-cytochrome c reductase complex (complex III or cytochrome b-c1 complex) that is part of the mitochondrial respiratory chain. The b-c1 complex mediates electron transfer from ubiquinol to cytochrome c. Contributes to the generation of a proton gradient across the mitochondrial membrane that is then used for ATP synthesis. In Candida parapsilosis (Yeast), this protein is Cytochrome b (COB).